Consider the following 252-residue polypeptide: Centriole, cilia and spindle-associated protein (252 aa).

Methionine 1 is subject to N-acetylmethionine. Positions 9-15 (SEYMKRY) match the ST]-E-Y-X(3)-Y motif 1; required for efficient microtubule binding and stabilization motif. Positions 49 to 163 (WDAWGPDSPS…RSTSKIKENK (115 aa)) are disordered. The span at 54–64 (PDSPSDSSASP) shows a compositional bias: low complexity. Position 65 is a phosphoserine (serine 65). The span at 108 to 125 (PKKDTEEKPEEHKTKETD) shows a compositional bias: basic and acidic residues. Serine 191 carries the phosphoserine modification. The ST]-E-Y-X(3)-Y motif 2; required for efficient microtubule binding and stabilization motif lies at 242 to 248 (TEYMRCY).

This sequence belongs to the CCSAP family. In terms of assembly, associates with microtubules; the association occurs on polyglutamylated tubulin.

Its subcellular location is the cytoplasm. The protein resides in the cytoskeleton. It localises to the microtubule organizing center. The protein localises to the centrosome. It is found in the centriole. Its subcellular location is the spindle. The protein resides in the cilium basal body. It localises to the cilium axoneme. The protein localises to the cell projection. It is found in the axon. Its subcellular location is the cilium. In terms of biological role, plays a role in microtubule (MT) stabilization and this stabilization involves the maintenance of NUMA1 at the spindle poles. Colocalizes with polyglutamylated MTs to promote MT stabilization and regulate bipolar spindle formation in mitosis. Binding of CCSAP to centrosomes and the spindle around centrosomes during mitosis inhibits MT depolymerization, thereby stabilizing the mitotic spindle. May play a role in embryonic development. May be required for proper cilia beating. The chain is Centriole, cilia and spindle-associated protein (Ccsap) from Mus musculus (Mouse).